Reading from the N-terminus, the 216-residue chain is uncharacterized protein (216 aa).

This is an uncharacterized protein from Escherichia coli (strain K12).